The chain runs to 154 residues: MILGEYVLRDLFPDLDEDQYQPAGIDLKLDRVFRLEGRGALLEGDDKRLPEYREVETEGGVFELEPNVPYVLELAPELEIPEDTAVLFLPRSTLLRSGVSVHTALGDPGFRGKIRVLAVNHHAAPYRIAHGERVVQAVFLRAEDAGRYEGDYGR.

This sequence belongs to the dCTP deaminase family. Archaeal dUTPase subfamily.

It carries out the reaction dUTP + H2O = dUMP + diphosphate + H(+). Its pathway is pyrimidine metabolism; dUMP biosynthesis; dUMP from dCTP (dUTP route): step 2/2. Its function is as follows. This enzyme is involved in nucleotide metabolism: it produces dUMP, the immediate precursor of thymidine nucleotides and it decreases the intracellular concentration of dUTP so that uracil cannot be incorporated into DNA. This is Probable deoxyuridine 5'-triphosphate nucleotidohydrolase from Methanopyrus kandleri (strain AV19 / DSM 6324 / JCM 9639 / NBRC 100938).